A 146-amino-acid polypeptide reads, in one-letter code: Large ribosomal subunit protein uL15 (146 aa).

Residues 1–52 (MKLSNLSPKAGSKKRRRRVGRGIAAGQGASCGFGMRGQKSRSGTGTKAGFEG) form a disordered region. The span at 11 to 20 (GSKKRRRRVG) shows a compositional bias: basic residues. Gly residues predominate over residues 23 to 35 (IAAGQGASCGFGM).

It belongs to the universal ribosomal protein uL15 family. Part of the 50S ribosomal subunit.

In terms of biological role, binds to the 23S rRNA. The sequence is that of Large ribosomal subunit protein uL15 from Picosynechococcus sp. (strain ATCC 27264 / PCC 7002 / PR-6) (Agmenellum quadruplicatum).